A 248-amino-acid polypeptide reads, in one-letter code: Isoprenyl transferase (248 aa).

Aspartate 23 is a catalytic residue. Aspartate 23 contacts Mg(2+). Substrate is bound by residues 24–27 (GNGR), tryptophan 28, arginine 36, histidine 40, and 68–70 (STE). Asparagine 71 functions as the Proton acceptor in the catalytic mechanism. Substrate contacts are provided by residues tryptophan 72, arginine 74, arginine 185, and 191–193 (RIS). Glutamate 204 provides a ligand contact to Mg(2+).

It belongs to the UPP synthase family. In terms of assembly, homodimer. Mg(2+) is required as a cofactor.

Functionally, catalyzes the condensation of isopentenyl diphosphate (IPP) with allylic pyrophosphates generating different type of terpenoids. In Neisseria meningitidis serogroup A / serotype 4A (strain DSM 15465 / Z2491), this protein is Isoprenyl transferase.